The primary structure comprises 274 residues: E3 ubiquitin-protein ligase complex SLX5-SLX8 subunit SLX8 (274 aa).

Disordered stretches follow at residues 1–117 (MARR…GNNI) and 136–159 (ANTPSASPMLDAAPPTTKPGTNSK). A compositionally biased stretch (basic and acidic residues) spans 13–28 (ENLRIKRVRLESVRQN). S50 is subject to Phosphoserine. T66 carries the post-translational modification Phosphothreonine. Residues 66–75 (TSEEDGDDDL) are compositionally biased toward acidic residues. The residue at position 67 (S67) is a Phosphoserine. Over residues 97–108 (GNHDRETMHTEE) the composition is skewed to basic and acidic residues. An RING-type zinc finger spans residues 206 to 250 (CPICFEPPETALMTLCGHVFCCPCLFQMVNSSRTCRQFGHCALCR).

Component of the heterodimeric SUMO-targeted ubiquitin ligase (STUbL) complex composed of SLX5 and SLX8.

The protein localises to the nucleus. It localises to the chromosome. Its subcellular location is the centromere. The protein resides in the kinetochore. It carries out the reaction S-ubiquitinyl-[E2 ubiquitin-conjugating enzyme]-L-cysteine + [acceptor protein]-L-lysine = [E2 ubiquitin-conjugating enzyme]-L-cysteine + N(6)-ubiquitinyl-[acceptor protein]-L-lysine.. The protein operates within protein modification; protein ubiquitination. Its function is as follows. Component of the SUMO-targeted ubiquitin ligase (STUbL) complex SLX5/SLX8 that mediates ubiquitination and subsequent desumoylation of sumoylated proteins and proteins containing SUMO-like domains for their degradation. The STUbL complex SLX5/SLX8 stimulates ubiquitin conjugating enzymes, including UBC1, UBC4, UBC5 and UBC13-MMS2, and mediates the proteolytic down-regulation of sumoylated proteins. The STUbL complex SLX5/SLX8 is involved in ubiquitin-mediated degradation of histone variant CSE4, preventing mislocalization to euchromatin. The complex plays an essential role in maintenance of chromosome stability and links SUMO-dependent ubiquitination to a centromere-specific function during mitosis. The complex is involved in proteolysis of spindle positioning protein KAR9 and ensures correct spindle function by regulating levels of microtubule-associated proteins. During replication, the complex helps to prevent DNA lesions via recombination and has a role in localizing the DNA damage protein DCD2. The complex especially ubiquitinates the nuclease YEN1 and prevents persistent accumulation of a fraction of YEN1 associated with sites of activity in late G2/M and helps maintain the balance between pro- and anti-crossover pathways during homologous recombination. It is also involved in ubiquitin-mediated degradation of DNA repair proteins RAD52 and RAD57. Finally, the complex is recruited to distinct genomic hotspots of non-H2B protein ubiquitination (ub-hotspots) by the sumoylated transcription factor-like protein EUC1 where it ubiquitinates EUC1 and presumably other targets. This chain is E3 ubiquitin-protein ligase complex SLX5-SLX8 subunit SLX8 (SLX8), found in Saccharomyces cerevisiae (strain ATCC 204508 / S288c) (Baker's yeast).